We begin with the raw amino-acid sequence, 241 residues long: Outer membrane protein assembly factor BamD (241 aa).

The signal sequence occupies residues 1–17 (MKYQTLSGLLALSLLFG). C18 carries N-palmitoyl cysteine lipidation. C18 is lipidated: S-diacylglycerol cysteine.

The protein belongs to the BamD family. Part of the Bam complex.

It is found in the cell outer membrane. Its function is as follows. Part of the outer membrane protein assembly complex, which is involved in assembly and insertion of beta-barrel proteins into the outer membrane. This Vibrio cholerae serotype O1 (strain ATCC 39315 / El Tor Inaba N16961) protein is Outer membrane protein assembly factor BamD.